We begin with the raw amino-acid sequence, 313 residues long: Thiamine thiazole synthase (313 aa).

Residues Ala-71, 92–93 (EA), Gly-100, and Val-165 contribute to the substrate site. Cys-199 carries the post-translational modification 2,3-didehydroalanine (Cys). Residues Asp-201, His-216, Met-268, and 278–280 (RMG) contribute to the substrate site.

The protein belongs to the THI4 family. Homooctamer. Fe cation serves as cofactor. During the catalytic reaction, a sulfide is transferred from Cys-199 to a reaction intermediate, generating a dehydroalanine residue.

It localises to the cytoplasm. Its subcellular location is the nucleus. The catalysed reaction is [ADP-thiazole synthase]-L-cysteine + glycine + NAD(+) = [ADP-thiazole synthase]-dehydroalanine + ADP-5-ethyl-4-methylthiazole-2-carboxylate + nicotinamide + 3 H2O + 2 H(+). Involved in biosynthesis of the thiamine precursor thiazole. Catalyzes the conversion of NAD and glycine to adenosine diphosphate 5-(2-hydroxyethyl)-4-methylthiazole-2-carboxylic acid (ADT), an adenylated thiazole intermediate. The reaction includes an iron-dependent sulfide transfer from a conserved cysteine residue of the protein to a thiazole intermediate. The enzyme can only undergo a single turnover, which suggests it is a suicide enzyme. May have additional roles in adaptation to various stress conditions and in DNA damage tolerance. This is Thiamine thiazole synthase from Coprinopsis cinerea (strain Okayama-7 / 130 / ATCC MYA-4618 / FGSC 9003) (Inky cap fungus).